The chain runs to 278 residues: NADPH-dependent 7-cyano-7-deazaguanine reductase (278 aa).

87–89 (IES) lines the substrate pocket. 89–90 (SK) is a binding site for NADPH. Residue C185 is the Thioimide intermediate of the active site. Residue D192 is the Proton donor of the active site. 224–225 (HE) contributes to the substrate binding site. 253–254 (RG) contributes to the NADPH binding site. Residues 255–278 (GLDINPYRSTNPTFSVQNHRSFRQ) form a disordered region. Polar residues predominate over residues 261-278 (YRSTNPTFSVQNHRSFRQ).

The protein belongs to the GTP cyclohydrolase I family. QueF type 2 subfamily. In terms of assembly, homodimer.

It localises to the cytoplasm. It catalyses the reaction 7-aminomethyl-7-carbaguanine + 2 NADP(+) = 7-cyano-7-deazaguanine + 2 NADPH + 3 H(+). It functions in the pathway tRNA modification; tRNA-queuosine biosynthesis. Catalyzes the NADPH-dependent reduction of 7-cyano-7-deazaguanine (preQ0) to 7-aminomethyl-7-deazaguanine (preQ1). The polypeptide is NADPH-dependent 7-cyano-7-deazaguanine reductase (Coxiella burnetii (strain Dugway 5J108-111)).